Reading from the N-terminus, the 986-residue chain is Bifunctional glutamine synthetase adenylyltransferase/adenylyl-removing enzyme (986 aa).

The adenylyl removase stretch occupies residues 1 to 470; the sequence is MAAVAKRTVT…ERHYAALFET (470 aa). The segment at 476–986 is adenylyl transferase; the sequence is AGIGNLVFTG…FDLLLRAGRP (511 aa).

Belongs to the GlnE family. The cofactor is Mg(2+).

The enzyme catalyses [glutamine synthetase]-O(4)-(5'-adenylyl)-L-tyrosine + phosphate = [glutamine synthetase]-L-tyrosine + ADP. It carries out the reaction [glutamine synthetase]-L-tyrosine + ATP = [glutamine synthetase]-O(4)-(5'-adenylyl)-L-tyrosine + diphosphate. Its function is as follows. Involved in the regulation of glutamine synthetase GlnA, a key enzyme in the process to assimilate ammonia. When cellular nitrogen levels are high, the C-terminal adenylyl transferase (AT) inactivates GlnA by covalent transfer of an adenylyl group from ATP to specific tyrosine residue of GlnA, thus reducing its activity. Conversely, when nitrogen levels are low, the N-terminal adenylyl removase (AR) activates GlnA by removing the adenylyl group by phosphorolysis, increasing its activity. The regulatory region of GlnE binds the signal transduction protein PII (GlnB) which indicates the nitrogen status of the cell. This is Bifunctional glutamine synthetase adenylyltransferase/adenylyl-removing enzyme from Mesorhizobium japonicum (strain LMG 29417 / CECT 9101 / MAFF 303099) (Mesorhizobium loti (strain MAFF 303099)).